A 221-amino-acid chain; its full sequence is Membrane-bound lytic murein transglycosylase E (221 aa).

Belongs to the transglycosylase Slt family.

The enzyme catalyses Exolytic cleavage of the (1-&gt;4)-beta-glycosidic linkage between N-acetylmuramic acid (MurNAc) and N-acetylglucosamine (GlcNAc) residues in peptidoglycan, from either the reducing or the non-reducing ends of the peptidoglycan chains, with concomitant formation of a 1,6-anhydrobond in the MurNAc residue.. In terms of biological role, murein-degrading enzyme. May play a role in recycling of muropeptides during cell elongation and/or cell division. This chain is Membrane-bound lytic murein transglycosylase E (mltE), found in Buchnera aphidicola subsp. Acyrthosiphon pisum (strain APS) (Acyrthosiphon pisum symbiotic bacterium).